Reading from the N-terminus, the 351-residue chain is Peptide chain release factor 1 (351 aa).

At Q229 the chain carries N5-methylglutamine.

The protein belongs to the prokaryotic/mitochondrial release factor family. In terms of processing, methylated by PrmC. Methylation increases the termination efficiency of RF1.

The protein resides in the cytoplasm. In terms of biological role, peptide chain release factor 1 directs the termination of translation in response to the peptide chain termination codons UAG and UAA. In Ruegeria pomeroyi (strain ATCC 700808 / DSM 15171 / DSS-3) (Silicibacter pomeroyi), this protein is Peptide chain release factor 1.